The chain runs to 242 residues: High mobility group protein homolog (242 aa).

2 consecutive DNA-binding regions (HMG box) follow at residues 54 to 122 and 126 to 197; these read PKRN…EANK and KPVK…IDKE.

It is found in the host nucleus. This is High mobility group protein homolog (EF1) from Acheta domesticus (House cricket).